Reading from the N-terminus, the 361-residue chain is DNA-(apurinic or apyrimidinic site) endonuclease (361 aa).

Residues 1–90 (MTSRTKKLKM…TNKTTASVSI (90 aa)) form a disordered region. Residues 25-39 (TSEEEKEEVEEEEEE) are compositionally biased toward acidic residues. Positions 41 to 44 (KKRK) match the Nuclear localization signal motif. Positions 43–64 (RKLVKKTPAKKAPAKKAAAKKK) are enriched in basic residues. Residues 68 to 80 (EDEDEEEKEEEEE) are compositionally biased toward acidic residues. E139 is a binding site for Mg(2+). Residue Y211 is part of the active site. Positions 252, 254, and 350 each coordinate Mg(2+). The Proton donor/acceptor role is filled by D252.

It belongs to the DNA repair enzymes AP/ExoA family. Requires Mg(2+) as cofactor. It depends on Mn(2+) as a cofactor.

The protein localises to the nucleus. This Dictyostelium discoideum (Social amoeba) protein is DNA-(apurinic or apyrimidinic site) endonuclease (apeA).